The primary structure comprises 191 residues: Syndecan-2-A (191 aa).

The N-terminal stretch at 1 to 22 (MRNVWLIVPFALLAALSGETWA) is a signal peptide. At 23–137 (QADRDLYIDS…NLFHRTEVLA (115 aa)) the chain is on the extracellular side. Positions 32 to 60 (STESSGNYPVDDDDYSSGSGSGIPARGDD) are disordered. O-linked (Xyl...) (glycosaminoglycan) serine glycans are attached at residues Ser36, Ser48, Ser50, and Ser52. A helical transmembrane segment spans residues 138 to 158 (AVIAGGGIGFLFAVFLILLLV). Residues 159–191 (YRMRKKDEGSYDLGERKPSSAVYQKAPTKEFYA) are Cytoplasmic-facing. The interval 168–191 (SYDLGERKPSSAVYQKAPTKEFYA) is disordered.

Belongs to the syndecan proteoglycan family. In terms of processing, O-glycosylated; contains both heparan sulfate and chondroitin sulfate.

It is found in the membrane. Cell surface proteoglycan. In Xenopus laevis (African clawed frog), this protein is Syndecan-2-A (sdc2-a).